The sequence spans 276 residues: Cell division protein FtsQ (276 aa).

The Cytoplasmic portion of the chain corresponds to 1-27 (MSQAALNTRNSEEEVSSRRNNGTRLAG). A helical membrane pass occupies residues 28-48 (ILFLLTVLTTVLVSGWVVLGW). Residues 49–276 (MEDAQRLPLS…QQNQAQAEQQ (228 aa)) are Periplasmic-facing. One can recognise a POTRA domain in the interval 55-126 (LPLSKLVLTG…DELKIHLVEY (72 aa)). Residues 255 to 276 (GWAPLPPEESTQQQNQAQAEQQ) are disordered. Positions 266-276 (QQQNQAQAEQQ) are enriched in low complexity.

The protein belongs to the FtsQ/DivIB family. FtsQ subfamily. As to quaternary structure, part of a complex composed of FtsB, FtsL and FtsQ. The complex can be formed before its localization to the division site. This tripartite complex can be divided further into a subcomplex of FtsB and FtsL, which forms in the absence of FtsQ. Interacts with FtsA, FtsK, FtsL, FtsB, FtsW, FtsI, FtsN, FtsX and YmgF.

It localises to the cell inner membrane. In terms of biological role, essential cell division protein. May link together the upstream cell division proteins, which are predominantly cytoplasmic, with the downstream cell division proteins, which are predominantly periplasmic. May control correct divisome assembly. This is Cell division protein FtsQ from Escherichia coli (strain K12).